Here is a 714-residue protein sequence, read N- to C-terminus: Fatty acid oxidation complex subunit alpha (714 aa).

An enoyl-CoA hydratase region spans residues 1–190 (MEMASAFTLN…KLGLVDDVVP (190 aa)). The segment at 306–714 (APLNSVGILG…FWKTTATDLQ (409 aa)) is 3-hydroxyacyl-CoA dehydrogenase.

The protein in the N-terminal section; belongs to the enoyl-CoA hydratase/isomerase family. It in the central section; belongs to the 3-hydroxyacyl-CoA dehydrogenase family. As to quaternary structure, heterotetramer of two alpha chains (FadJ) and two beta chains (FadI).

It localises to the cytoplasm. It catalyses the reaction a (3S)-3-hydroxyacyl-CoA = a (2E)-enoyl-CoA + H2O. The catalysed reaction is a 4-saturated-(3S)-3-hydroxyacyl-CoA = a (3E)-enoyl-CoA + H2O. The enzyme catalyses a (3S)-3-hydroxyacyl-CoA + NAD(+) = a 3-oxoacyl-CoA + NADH + H(+). It carries out the reaction (3S)-3-hydroxybutanoyl-CoA = (3R)-3-hydroxybutanoyl-CoA. It functions in the pathway lipid metabolism; fatty acid beta-oxidation. Functionally, catalyzes the formation of a hydroxyacyl-CoA by addition of water on enoyl-CoA. Also exhibits 3-hydroxyacyl-CoA epimerase and 3-hydroxyacyl-CoA dehydrogenase activities. This chain is Fatty acid oxidation complex subunit alpha, found in Escherichia coli (strain UTI89 / UPEC).